Reading from the N-terminus, the 131-residue chain is DNA-directed RNA polymerases I, II, and III subunit RPABC2 (131 aa).

The segment at 1-24 (MDDADYDNDDVGGDDFDDVDEDVD) is disordered.

This sequence belongs to the archaeal Rpo6/eukaryotic RPB6 RNA polymerase subunit family. In terms of assembly, component of the RNA polymerase I (Pol I), RNA polymerase II (Pol II) and RNA polymerase III (Pol III) complexes consisting of at least 13, 12 and 17 subunits, respectively.

The protein localises to the nucleus. Functionally, DNA-dependent RNA polymerases catalyze the transcription of DNA into RNA using the four ribonucleoside triphosphates as substrates. Common component of RNA polymerases I, II and III which synthesize ribosomal RNA precursors, mRNA precursors and many functional non-coding RNAs, and small RNAs, such as 5S rRNA and tRNAs, respectively. Pol II is the central component of the basal RNA polymerase II transcription machinery. Pols are composed of mobile elements that move relative to each other. In Pol II, Polr2F/RPB6 is part of the clamp element and together with parts of Polr2A/RPB1 and RPB2 forms a pocket to which the Polr2D/RPB4-Polr2G/RPB7 subcomplex binds. This is DNA-directed RNA polymerases I, II, and III subunit RPABC2 from Drosophila melanogaster (Fruit fly).